The chain runs to 134 residues: Arsenate reductase (134 aa).

Catalysis depends on nucleophile residues C11, C83, and C90. Disulfide bonds link C11-C83 and C83-C90.

It belongs to the low molecular weight phosphotyrosine protein phosphatase family. Thioredoxin-coupled ArsC subfamily.

Its subcellular location is the cytoplasm. It carries out the reaction arsenate + [thioredoxin]-dithiol + H(+) = arsenite + [thioredoxin]-disulfide + H2O. Its function is as follows. Catalyzes the reduction of arsenate [As(V)] to arsenite [As(III)]. In Bacillus cereus (strain Q1), this protein is Arsenate reductase.